A 723-amino-acid polypeptide reads, in one-letter code: 1,3-alpha-isomaltosidase (723 aa).

Asp451 serves as the catalytic Nucleophile. The active site involves Glu454. Asp516 functions as the Proton donor in the catalytic mechanism. His581 lines the substrate pocket.

This sequence belongs to the glycosyl hydrolase 31 family.

The protein resides in the cytoplasm. It catalyses the reaction cyclobis-(1-&gt;3)-alpha-D-isomaltosyl + 2 H2O = 2 isomaltose. Its function is as follows. Involved in the intracellular degradation of the cyclic tetrasaccharide cyclobis-(1-6)-alpha-nigerosyl (CNN) formed extracellularly from starch. Catalyzes the hydrolysis of the alpha-1,3-glucosidic linkage of cyclobis-(1-6)-alpha-nigerosyl (CNN) to yield isomaltose via a possible linear tetrasaccharide. It has a strong preference for the alpha-(1-3)-isomaltosyl moiety. In Kribbella flavida (strain DSM 17836 / JCM 10339 / NBRC 14399), this protein is 1,3-alpha-isomaltosidase.